The sequence spans 2025 residues: E3 ubiquitin-protein ligase TTC3 (2025 aa).

The interval 1-230 is interaction with POLG; sequence MDNFAEGDFT…TQSCMDCIEE (230 aa). TPR repeat units lie at residues 231-264 and 266-298; these read GELM…RPEN and LLYG…KNTW. Phosphoserine; by PKB/AKT2 is present on S378. The tract at residues 423-458 is disordered; sequence DCHPEFSPPSSQPPKHKGKQKSRNNESEKFSSSSPL. TPR repeat units follow at residues 536-572 and 576-609; these read VLVV…YPSE and CLAY…IYRL. The interval 786 to 805 is disordered; it reads ERMEEDLRESNPPKNEEQKE. Basic and acidic residues predominate over residues 793–805; it reads RESNPPKNEEQKE. S1009 bears the Phosphoserine mark. Disordered regions lie at residues 1012–1068, 1215–1295, 1773–1842, and 1894–1944; these read APFS…GPFA, KPDV…SCNS, DPSV…SPKK, and ILDE…QKAE. A compositionally biased stretch (basic residues) spans 1019-1029; that stretch reads VKNKSKKKKPK. Residues 1038 to 1052 show a composition bias toward polar residues; that stretch reads SGTTSVTSNNEIITS. S1061 carries the post-translational modification Phosphoserine. Positions 1894–1912 are enriched in basic and acidic residues; the sequence is ILDEQKKKKPNPGKDKRTY. Over residues 1913-1928 the composition is skewed to polar residues; the sequence is EPSSATPVTRSSQGSP. Residues 1957 to 1997 form an RING-type zinc finger; that stretch reads CEICHEVFKSKNVRVLKCGHKYHKGCFKQWLKGQSACPACQ. The interval 2004–2025 is disordered; that stretch reads EESPSGRGWPSQNQELPSCSSR. The segment covering 2013–2025 has biased composition (polar residues); the sequence is PSQNQELPSCSSR.

Interacts (when phosphorylated on Ser-378) with AKT1, AKT2 and AKT3 (when phosphorylated). Interacts with CIT. Interacts with POLG. Interacts with HSP70. Interacts with SMURF2. Post-translationally, phosphorylation on Ser-378 by Akt is required for ubiquitin ligase activity. Proteolytically cleaved into differently sized N- and C-terminal fragments. Found in all tissues examined.

The protein localises to the nucleus. It localises to the cytoplasm. It is found in the golgi apparatus. It carries out the reaction S-ubiquitinyl-[E2 ubiquitin-conjugating enzyme]-L-cysteine + [acceptor protein]-L-lysine = [E2 ubiquitin-conjugating enzyme]-L-cysteine + N(6)-ubiquitinyl-[acceptor protein]-L-lysine.. Its pathway is protein modification; protein ubiquitination. Functionally, E3 ubiquitin-protein ligase which catalyzes the formation of 'Lys-48'-polyubiquitin chains. Mediates the ubiquitination and subsequent degradation of phosphorylated Akt (AKT1, AKT2 and AKT3) in the nucleus. Acts as a terminal regulator of Akt signaling after activation; its phosphorylation by Akt, which is a prerequisite for ubiquitin ligase activity, suggests the existence of a regulation mechanism required to control Akt levels after activation. Positively regulates TGFB1-induced epithelial-mesenchymal transition and myofibroblast differentiation by mediating the ubiquitination and subsequent degradation of SMURF2. Regulates neuronal differentiation by regulating actin remodeling and Golgi organization via a signaling cascade involving RHOA, CIT and ROCK. Inhibits cell proliferation. The polypeptide is E3 ubiquitin-protein ligase TTC3 (TTC3) (Homo sapiens (Human)).